The sequence spans 411 residues: Glutamyl-tRNA reductase (411 aa).

Substrate contacts are provided by residues threonine 48–arginine 51, serine 106, glutamate 111–glutamine 113, and glutamine 117. Cysteine 49 acts as the Nucleophile in catalysis. Residue glycine 186 to glycine 191 coordinates NADP(+).

This sequence belongs to the glutamyl-tRNA reductase family. Homodimer.

The catalysed reaction is (S)-4-amino-5-oxopentanoate + tRNA(Glu) + NADP(+) = L-glutamyl-tRNA(Glu) + NADPH + H(+). The protein operates within porphyrin-containing compound metabolism; protoporphyrin-IX biosynthesis; 5-aminolevulinate from L-glutamyl-tRNA(Glu): step 1/2. Functionally, catalyzes the NADPH-dependent reduction of glutamyl-tRNA(Glu) to glutamate 1-semialdehyde (GSA). This chain is Glutamyl-tRNA reductase, found in Clostridium novyi (strain NT).